Consider the following 491-residue polypeptide: 23S rRNA (uracil(1939)-C(5))-methyltransferase RlmD (491 aa).

The segment covering 1 to 10 (MSDPTEHPEI) has biased composition (basic and acidic residues). The disordered stretch occupies residues 1–28 (MSDPTEHPEILQDPSSSAPVQGRTDLPP). A TRAM domain is found at 18-81 (APVQGRTDLP…NNWEQASLTA (64 aa)). [4Fe-4S] cluster-binding residues include Cys94, Cys104, Cys107, and Cys186. S-adenosyl-L-methionine-binding residues include Gln294, Phe323, Asn328, Glu344, Asn379, and Asp400. The active-site Nucleophile is the Cys447.

It belongs to the class I-like SAM-binding methyltransferase superfamily. RNA M5U methyltransferase family. RlmD subfamily.

The catalysed reaction is uridine(1939) in 23S rRNA + S-adenosyl-L-methionine = 5-methyluridine(1939) in 23S rRNA + S-adenosyl-L-homocysteine + H(+). Catalyzes the formation of 5-methyl-uridine at position 1939 (m5U1939) in 23S rRNA. The polypeptide is 23S rRNA (uracil(1939)-C(5))-methyltransferase RlmD (Paracidovorax citrulli (strain AAC00-1) (Acidovorax citrulli)).